The chain runs to 293 residues: Formamidopyrimidine-DNA glycosylase (293 aa).

Pro-2 (schiff-base intermediate with DNA) is an active-site residue. Glu-3 acts as the Proton donor in catalysis. Lys-58 serves as the catalytic Proton donor; for beta-elimination activity. 3 residues coordinate DNA: His-104, Arg-123, and Arg-166. The segment at 257–293 (AVYDREGEPCRSKGCDGVVKRFVQNGRSTFWCPKCQK) adopts an FPG-type zinc-finger fold. Residue Arg-283 is the Proton donor; for delta-elimination activity of the active site.

It belongs to the FPG family. Monomer. Zn(2+) serves as cofactor.

It catalyses the reaction Hydrolysis of DNA containing ring-opened 7-methylguanine residues, releasing 2,6-diamino-4-hydroxy-5-(N-methyl)formamidopyrimidine.. The catalysed reaction is 2'-deoxyribonucleotide-(2'-deoxyribose 5'-phosphate)-2'-deoxyribonucleotide-DNA = a 3'-end 2'-deoxyribonucleotide-(2,3-dehydro-2,3-deoxyribose 5'-phosphate)-DNA + a 5'-end 5'-phospho-2'-deoxyribonucleoside-DNA + H(+). Involved in base excision repair of DNA damaged by oxidation or by mutagenic agents. Acts as a DNA glycosylase that recognizes and removes damaged bases. Has a preference for oxidized purines, such as 7,8-dihydro-8-oxoguanine (8-oxoG). Has AP (apurinic/apyrimidinic) lyase activity and introduces nicks in the DNA strand. Cleaves the DNA backbone by beta-delta elimination to generate a single-strand break at the site of the removed base with both 3'- and 5'-phosphates. This chain is Formamidopyrimidine-DNA glycosylase, found in Rhodopseudomonas palustris (strain BisB18).